The sequence spans 121 residues: Putative membrane protein insertion efficiency factor (121 aa).

Belongs to the UPF0161 family.

It localises to the cell membrane. Functionally, could be involved in insertion of integral membrane proteins into the membrane. The sequence is that of Putative membrane protein insertion efficiency factor from Rhodococcus opacus (strain B4).